The sequence spans 325 residues: MDSELKEEIPVHEEFILCGGAETQVLKCGPWTDLFHDQSVKRPKLLIFIIPGNPGFSAFYVPFAKALYSLTNRRFPVWTISHAGHALAPKDKKILTTSEDSNAQEIKDIYGLNGQIEHKLAFLRTHVPKDMKLVLIGHSIGSYFTLQMLKRVPELPVIRAFLLFPTIERMSESPNGRIATPLLCWFRYVLYVTGYLLLKPCPETIKSLLIRRGLQVMNLENEFSPLNILEPFCLANAAYLGGQEMMEVVKRDDETIKEHLCKLTFYYGTIDPWCPKEYYEDIKKDFPEGDIRLCEKNIPHAFITHFNQEMADMIADSLKDDLSKM.

The active-site Nucleophile is the Ser139. Catalysis depends on charge relay system residues Asp271 and His300.

It belongs to the AB hydrolase superfamily. LDAH family. As to expression, present in macrophage-rich areas in atherosclerotic lesions (at protein level). Expressed in monocytes and monocyte-derived macrophages (at protein level).

The protein localises to the lipid droplet. It localises to the endoplasmic reticulum. The enzyme catalyses a cholesterol ester + H2O = cholesterol + a fatty acid + H(+). Probable serine lipid hydrolase associated with lipid droplets. Has low cholesterol esterase activity. Appears to lack triglyceride lipase activity. Involved in cholesterol and triglyceride homeostasis; has opposing effects, stimulating cellular triglyceride accumulation and cellular cholesterol release. Acts antagonistically with PNPLA2/ATGL in regulation of cellular lipid stores. May regulate triglyceride accumulation indirectly through stimulation of PNPLA2/ATGL ubiquitination and proteasomal degradation. Promotes microtubule-dependent lipid droplet fusion. Highly expressed in macrophage-rich areas in atherosclerotic lesions, suggesting that it could promote cholesterol ester turnover in macrophages. The chain is Lipid droplet-associated hydrolase from Homo sapiens (Human).